Consider the following 332-residue polypeptide: UPF0158 protein TC_0713 (332 aa).

Disordered regions lie at residues 196-215 (ALNP…KVEA) and 291-332 (LGYD…KARS). The segment covering 295–316 (GDGDASDFFGEEYDDDDDDDDD) has biased composition (acidic residues). Over residues 320-332 (KKAAKRGRKKARS) the composition is skewed to basic residues.

This sequence belongs to the UPF0158 family.

The polypeptide is UPF0158 protein TC_0713 (Chlamydia muridarum (strain MoPn / Nigg)).